Here is a 303-residue protein sequence, read N- to C-terminus: Sulfate adenylyltransferase subunit 2 (303 aa).

The protein belongs to the PAPS reductase family. CysD subfamily. Heterodimer composed of CysD, the smaller subunit, and CysN.

It catalyses the reaction sulfate + ATP + H(+) = adenosine 5'-phosphosulfate + diphosphate. It participates in sulfur metabolism; hydrogen sulfide biosynthesis; sulfite from sulfate: step 1/3. With CysN forms the ATP sulfurylase (ATPS) that catalyzes the adenylation of sulfate producing adenosine 5'-phosphosulfate (APS) and diphosphate, the first enzymatic step in sulfur assimilation pathway. APS synthesis involves the formation of a high-energy phosphoric-sulfuric acid anhydride bond driven by GTP hydrolysis by CysN coupled to ATP hydrolysis by CysD. This Phocaeicola vulgatus (strain ATCC 8482 / DSM 1447 / JCM 5826 / CCUG 4940 / NBRC 14291 / NCTC 11154) (Bacteroides vulgatus) protein is Sulfate adenylyltransferase subunit 2.